Consider the following 380-residue polypeptide: Anhydro-N-acetylmuramic acid kinase (380 aa).

9 to 16 (GTSVDGID) provides a ligand contact to ATP.

The protein belongs to the anhydro-N-acetylmuramic acid kinase family.

It catalyses the reaction 1,6-anhydro-N-acetyl-beta-muramate + ATP + H2O = N-acetyl-D-muramate 6-phosphate + ADP + H(+). Its pathway is amino-sugar metabolism; 1,6-anhydro-N-acetylmuramate degradation. It participates in cell wall biogenesis; peptidoglycan recycling. Its function is as follows. Catalyzes the specific phosphorylation of 1,6-anhydro-N-acetylmuramic acid (anhMurNAc) with the simultaneous cleavage of the 1,6-anhydro ring, generating MurNAc-6-P. Is required for the utilization of anhMurNAc either imported from the medium or derived from its own cell wall murein, and thus plays a role in cell wall recycling. This chain is Anhydro-N-acetylmuramic acid kinase, found in Cyanothece sp. (strain PCC 7425 / ATCC 29141).